Reading from the N-terminus, the 92-residue chain is Large ribosomal subunit protein eL43z (92 aa).

The C4-type zinc finger occupies 39–60 (CEFCGKYSVKRKVVGIWGCKDC).

Belongs to the eukaryotic ribosomal protein eL43 family.

The sequence is that of Large ribosomal subunit protein eL43z (RPL37AB) from Arabidopsis thaliana (Mouse-ear cress).